A 126-amino-acid chain; its full sequence is Large ribosomal subunit protein bL12 (126 aa).

It belongs to the bacterial ribosomal protein bL12 family. Homodimer. Part of the ribosomal stalk of the 50S ribosomal subunit. Forms a multimeric L10(L12)X complex, where L10 forms an elongated spine to which 2 to 4 L12 dimers bind in a sequential fashion. Binds GTP-bound translation factors.

Forms part of the ribosomal stalk which helps the ribosome interact with GTP-bound translation factors. Is thus essential for accurate translation. The sequence is that of Large ribosomal subunit protein bL12 from Legionella pneumophila (strain Paris).